The primary structure comprises 212 residues: Nodulation protein NolU (212 aa).

In terms of biological role, regulates cultivar-specific nodulation of soybean. In Rhizobium fredii (Sinorhizobium fredii), this protein is Nodulation protein NolU (nolU).